Here is a 583-residue protein sequence, read N- to C-terminus: Chloroplast sensor kinase, chloroplastic (583 aa).

The N-terminal 50 residues, 1–50, are a transit peptide targeting the chloroplast; it reads MSSIYLHGLSRRRRIGSVIVAIYMLDSCGAFLSASGSGRYPGFSYRGLSV. The GAF stretch occupies residues 97-277; it reads LFQELALSQL…SMDTERAALQ (181 aa). Residue Cys-115 participates in [3Fe-4S] cluster binding. The residue at position 292 (His-292) is a Phosphohistidine; by autocatalysis. Residues 412 to 442 are disordered; it reads AASGSNGPSNSTTSFSGNGSDVSTYTEDDGA. Over residues 414 to 431 the composition is skewed to low complexity; it reads SGSNGPSNSTTSFSGNGS. The Histidine kinase domain maps to 447 to 583; sequence SSLFSEMDLE…ALDWTLRKHW (137 aa).

It belongs to the chloroplast sensor kinase protein family. Oligomerizes. It depends on [3Fe-4S] cluster as a cofactor. Post-translationally, autophosphorylates, possibly on His-292.

The protein resides in the plastid. Its subcellular location is the chloroplast stroma. The catalysed reaction is ATP + protein L-histidine = ADP + protein N-phospho-L-histidine.. In terms of biological role, sensor kinase that senses the plastoquinone (PQ) redox state involved in stoichiometry adjustment of both photosystems (e.g. long-term adaptation via transcriptional regulation of reaction center genes of photosystems I and II) and state transitions (e.g. short-term adaptation involving reversible post-translational phosphorylation of light-harvesting complex II, LHC II), thus linking photosynthesis with gene expression in chloroplasts. Reduced PQ suppresses its autophosphorylation activity. This Phaeodactylum tricornutum (strain CCAP 1055/1) protein is Chloroplast sensor kinase, chloroplastic.